Consider the following 318-residue polypeptide: Bis(5'-nucleosyl)-tetraphosphatase, symmetrical (318 aa).

The disordered stretch occupies residues Pro-269–Asp-318. Basic residues predominate over residues Ala-282–Gly-297. A compositionally biased stretch (pro residues) spans Ala-309–Asp-318.

This sequence belongs to the Ap4A hydrolase family.

It catalyses the reaction P(1),P(4)-bis(5'-adenosyl) tetraphosphate + H2O = 2 ADP + 2 H(+). Its function is as follows. Hydrolyzes diadenosine 5',5'''-P1,P4-tetraphosphate to yield ADP. The sequence is that of Bis(5'-nucleosyl)-tetraphosphatase, symmetrical from Xanthomonas oryzae pv. oryzae (strain PXO99A).